The following is a 589-amino-acid chain: Outer envelope protein 64, chloroplastic (589 aa).

Residue M1 is a topological domain, chloroplast intermembrane. A helical membrane pass occupies residues 2-22 (ASQAANLWVLLGLGLAGILML). Over 23 to 141 (TKKLKKTVRE…NPAAPTRIPG (119 aa)) the chain is Cytoplasmic. The chain crosses the membrane as a helical span at residues 142 to 162 (GACSGAAVAVATNAVDFALGI). At 163 to 398 (DTVGGVRVPA…EITSEDYQNR (236 aa)) the chain is on the chloroplast intermembrane side. Residues 399-419 (ASSLLSIASISGCCQVTVPLG) form a helical membrane-spanning segment. The Cytoplasmic portion of the chain corresponds to 420 to 589 (HHEKCPISVS…LSAERLRKFQ (170 aa)). TPR repeat units lie at residues 474–507 (AEIA…SDNN), 508–541 (ATYY…DKKN), and 542–575 (VKAY…EPNN).

Part of the Toc complex and of the intermembrane space complex. In terms of tissue distribution, expressed in roots, cotyledons, leaves and flower buds.

Its subcellular location is the plastid. The protein localises to the chloroplast outer membrane. Its function is as follows. Chaperone receptor mediating Hsp90-dependent protein targeting to chloroplasts. Bi-functional preprotein receptor acting on both sides of the membrane. Not essential for an efficient import of pre-proteins into plastids. This is Outer envelope protein 64, chloroplastic (OEP64) from Arabidopsis thaliana (Mouse-ear cress).